Here is a 398-residue protein sequence, read N- to C-terminus: NADH dehydrogenase [ubiquinone] iron-sulfur protein 2 (398 aa).

Positions 261, 267, and 282 each coordinate [4Fe-4S] cluster.

The protein belongs to the complex I 49 kDa subunit family. As to quaternary structure, complex I is composed of about 45 different subunits. This is a component of the iron-sulfur (IP) fragment of the enzyme. [4Fe-4S] cluster serves as cofactor.

It is found in the mitochondrion. It carries out the reaction a ubiquinone + NADH + 5 H(+)(in) = a ubiquinol + NAD(+) + 4 H(+)(out). Its function is as follows. Core subunit of the mitochondrial membrane respiratory chain NADH dehydrogenase (Complex I) that is believed to belong to the minimal assembly required for catalysis. Complex I functions in the transfer of electrons from NADH to the respiratory chain. The immediate electron acceptor for the enzyme is believed to be ubiquinone. Component of the iron-sulfur (IP) fragment of the enzyme. This chain is NADH dehydrogenase [ubiquinone] iron-sulfur protein 2 (NAD7), found in Nephroselmis olivacea (Green alga).